A 76-amino-acid chain; its full sequence is DNA-directed RNA polymerase subunit epsilon (76 aa).

Belongs to the RNA polymerase subunit epsilon family. In terms of assembly, RNAP is composed of a core of 2 alpha, a beta and a beta' subunit. The core is associated with a delta subunit, and at least one of epsilon or omega. When a sigma factor is associated with the core the holoenzyme is formed, which can initiate transcription.

The catalysed reaction is RNA(n) + a ribonucleoside 5'-triphosphate = RNA(n+1) + diphosphate. In terms of biological role, a non-essential component of RNA polymerase (RNAP). This chain is DNA-directed RNA polymerase subunit epsilon, found in Streptococcus sanguinis (strain SK36).